A 79-amino-acid polypeptide reads, in one-letter code: MSEILPYSEDKMGRFGADPEGSDLSFSCRLQDTNSFFAGNQAKRPPKLGQIGRAKRVVIEDDRIDDVLKGMGEKPPSGV.

The tract at residues 1–21 (MSEILPYSEDKMGRFGADPEG) is disordered. The segment at 43–69 (KRPPKLGQIGRAKRVVIEDDRIDDVLK) is inhibitory domain.

It belongs to the CAMK2N family. In terms of assembly, interacts with CAMK2A and CAMK2B in the presence of Ca(2+)/calmodulin or after autophosphorylation.

It is found in the nucleus. Its subcellular location is the cytoplasm. It localises to the cytosol. The protein resides in the synapse. Functionally, potent and specific cellular inhibitor of CaM-kinase II (CAMK2). Traps Ca(2+)/calmodulin on CAMK2. The sequence is that of Calcium/calmodulin-dependent protein kinase II inhibitor 2 (CAMK2N2) from Bos taurus (Bovine).